The primary structure comprises 511 residues: Keratin, type II cytoskeletal 72 (511 aa).

Positions 1-124 (MSRQLTHFPR…DPEIQRVRAQ (124 aa)) are head. The interval 125 to 160 (EREQIKALNNKFASFIDKVRFLEQQNQVLETKWNLL) is coil 1A. Positions 125–438 (EREQIKALNN…KLLESEECRM (314 aa)) constitute an IF rod domain. The interval 161 to 179 (QQLDLNNCRKNLEPIYEGY) is linker 1. Positions 180–271 (ISNLQKQLEM…CLYEGEITQI (92 aa)) are coil 1B. A linker 12 region spans residues 272-295 (QSHISDTSIVLSMDNNRDLDLDSI). Positions 296–434 (IAEVRAQYEE…ATYRKLLESE (139 aa)) are coil 2. A tail region spans residues 435–511 (ECRMSGEYPN…SSCATKKASR (77 aa)). The tract at residues 486–511 (GSCGSELKDPLAKTSGSSCATKKASR) is disordered.

The protein belongs to the intermediate filament family. In terms of assembly, heterotetramer of two type I and two type II keratins. In terms of tissue distribution, highly expressed in hair follicles from scalp and eyebrow. Also expressed in palmoplantar epidermis. Not expressed in face skin despite the presence of fine hairs histologically. In hair, it is specifically present in the inner root sheath (IRS) of the hair follicle. Present in the IRS cuticle, but not in Henle or Huxley layers of the IRS. In the IRS cuticle, its presence is delayed up to the height of the apex of the dermal papilla (at protein level).

Functionally, has a role in hair formation. Specific component of keratin intermediate filaments in the inner root sheath (IRS) of the hair follicle. This is Keratin, type II cytoskeletal 72 (KRT72) from Homo sapiens (Human).